A 105-amino-acid chain; its full sequence is Nitrogen fixation nifHD2 region GlnB-like protein 1 (105 aa).

The protein belongs to the P(II) protein family.

In terms of biological role, could be involved in the regulation of nitrogen fixation. In Methanosarcina barkeri, this protein is Nitrogen fixation nifHD2 region GlnB-like protein 1.